We begin with the raw amino-acid sequence, 162 residues long: RNA pyrophosphohydrolase (162 aa).

Residues 7–149 enclose the Nudix hydrolase domain; that stretch reads KYRPCVGIML…KKEVYKTVIE (143 aa). A Nudix box motif is present at residues 40-61; the sequence is GGVDDGEELEQAALRELLEEVG.

Belongs to the Nudix hydrolase family. RppH subfamily. The cofactor is a divalent metal cation.

Its function is as follows. Accelerates the degradation of transcripts by removing pyrophosphate from the 5'-end of triphosphorylated RNA, leading to a more labile monophosphorylated state that can stimulate subsequent ribonuclease cleavage. The chain is RNA pyrophosphohydrolase from Wolbachia sp. subsp. Drosophila simulans (strain wRi).